A 304-amino-acid chain; its full sequence is CD-NTase-associated protein 6 (304 aa).

75 to 80 (GTGKTS) contacts ATP.

Belongs to the AAA ATPase family. In terms of assembly, oligomerizes. Homohexamer. Forms a 1:1:6 CdnD:Cap7:Cap6 complex.

Regulates complex assembly in a CBASS antivirus system. CBASS (cyclic oligonucleotide-based antiphage signaling system) provides immunity against bacteriophage. The CD-NTase protein synthesizes cyclic nucleotides in response to infection; these serve as specific second messenger signals. The signals activate a diverse range of effectors, leading to bacterial cell death and thus abortive phage infection. A type III-C(AAA) CBASS system. Its function is as follows. Prevents the CdnD:Cap7:Cap8 complex (also called CdnD:HORMA2:HORMA3) from synthesizing 2',3',3'-cyclic AMP-AMP-AMP (cAAA). Binds and disassembles an active CdnD:Cap7:Cap8 complex, inhibiting the complex's ability to synthesize cyclic nucleotide second messengers. An AAA+-ATPase remodeler, in the absence of foreign threat Cap6 probably maintains the Cap7 protein in an open, inactive state. Once activated (presumably by a bacteriophage protein) Cap7 binds to and activates its cognate CD-NTase (CdnD in this bacteria) to synthesize cAAA, a cyclic nucleotide second messenger. cAAA activates the NucC endonuclease which degrades all DNA in the infected cell, causing cell death and abortive phage infection. This chain is CD-NTase-associated protein 6, found in Pseudomonas aeruginosa.